The following is a 245-amino-acid chain: Adenosylcobinamide-GDP ribazoletransferase (245 aa).

5 consecutive transmembrane segments (helical) span residues 31–51 (FGRA…VLYA), 61–81 (PLLQ…ALHL), 113–133 (VAVV…AALL), 138–158 (AGLL…LFLT), and 192–212 (LAFG…FAWL).

It belongs to the CobS family. Requires Mg(2+) as cofactor.

It localises to the cell inner membrane. It catalyses the reaction alpha-ribazole + adenosylcob(III)inamide-GDP = adenosylcob(III)alamin + GMP + H(+). It carries out the reaction alpha-ribazole 5'-phosphate + adenosylcob(III)inamide-GDP = adenosylcob(III)alamin 5'-phosphate + GMP + H(+). It functions in the pathway cofactor biosynthesis; adenosylcobalamin biosynthesis; adenosylcobalamin from cob(II)yrinate a,c-diamide: step 7/7. Joins adenosylcobinamide-GDP and alpha-ribazole to generate adenosylcobalamin (Ado-cobalamin). Also synthesizes adenosylcobalamin 5'-phosphate from adenosylcobinamide-GDP and alpha-ribazole 5'-phosphate. The protein is Adenosylcobinamide-GDP ribazoletransferase of Pseudomonas aeruginosa (strain UCBPP-PA14).